The following is a 278-amino-acid chain: Energy-coupling factor transporter ATP-binding protein EcfA1 (278 aa).

Positions 5–239 (LLLESVSYQY…QDKLEAAGID (235 aa)) constitute an ABC transporter domain. 39-46 (GPNGSGKS) serves as a coordination point for ATP.

Belongs to the ABC transporter superfamily. Energy-coupling factor EcfA family. In terms of assembly, forms a stable energy-coupling factor (ECF) transporter complex composed of 2 membrane-embedded substrate-binding proteins (S component), 2 ATP-binding proteins (A component) and 2 transmembrane proteins (T component).

It is found in the cell membrane. In terms of biological role, ATP-binding (A) component of a common energy-coupling factor (ECF) ABC-transporter complex. Unlike classic ABC transporters this ECF transporter provides the energy necessary to transport a number of different substrates. This is Energy-coupling factor transporter ATP-binding protein EcfA1 from Halalkalibacterium halodurans (strain ATCC BAA-125 / DSM 18197 / FERM 7344 / JCM 9153 / C-125) (Bacillus halodurans).